The sequence spans 198 residues: MSYYAFEGLIPVVHPDAFVHPSAVLIGDVIVGAGVYIGPLASLRGDYGRLILEAGSNLQDGCIMHGYCDTDTIVHENGHIGHGAILHGCVVGRDALVGMNSVIMDGAVIGEESIVAAMSFVKAGFQGEARQLLVGSPARVLRQVTDQELHWKRLNTKEYQDLAIRCRTGLSETKPLTQAEENRPRLKGTTDVKPKSAQ.

A disordered region spans residues 174-198 (KPLTQAEENRPRLKGTTDVKPKSAQ). Positions 180–198 (EENRPRLKGTTDVKPKSAQ) are enriched in basic and acidic residues.

Belongs to the transferase hexapeptide repeat family.

It functions in the pathway amine and polyamine metabolism; carnitine metabolism. In terms of biological role, overproduction of CaiE stimulates the activity of CaiB and CaiD. The sequence is that of Carnitine operon protein CaiE from Salmonella dublin (strain CT_02021853).